Consider the following 361-residue polypeptide: (S)-coclaurine N-methyltransferase (361 aa).

Ser101, Gly139, Asn163, Gln167, Asp189, Ile190, and Val205 together coordinate S-adenosyl-L-methionine. The active site involves Cys336.

It belongs to the CFA/CMAS family. In terms of assembly, homodimer. Highly expressed in rhizomes. Detected in roots, petioles, flower buds and leaves. Expressed between the developing stele and ground tissues near the root apical meristem, in the immature endodermis, the pericycle and the spokes of developing xylem in the apical region of the root and in the protoderm of leaf primordia in rhizomes.

The protein localises to the cytoplasm. The catalysed reaction is norreticuline + S-adenosyl-L-methionine = reticuline + S-adenosyl-L-homocysteine + H(+). It catalyses the reaction (S)-coclaurine + S-adenosyl-L-methionine = (S)-N-methylcoclaurine + S-adenosyl-L-homocysteine + H(+). It carries out the reaction heliamine + S-adenosyl-L-methionine = N-methylheliamine + S-adenosyl-L-homocysteine + H(+). The protein operates within alkaloid biosynthesis. Functionally, involved in the biosynthesis of protoberberine alkaloids. N-methyltransferase with a substrate preference for (R,S)-norreticuline but also active with dimethoxytetrahydroisoquinoline. In Thalictrum flavum subsp. glaucum (Yellow meadow rue), this protein is (S)-coclaurine N-methyltransferase.